Here is a 142-residue protein sequence, read N- to C-terminus: Midkine-B (142 aa).

A signal peptide spans 1–20 (MELRAFCVILLITILAVSSQ). Disulfide bonds link Cys36–Cys60, Cys44–Cys69, Cys51–Cys73, Cys83–Cys115, and Cys93–Cys125.

This sequence belongs to the pleiotrophin family. In adults, expression is highest in the brain, eye and bone, with lower expression in the heart and lung. Not expressed in the ovary. In the tailbud stage embryo, expressed in the head and tail regions as well as in the central nervous system (CNS).

The protein localises to the secreted. In terms of biological role, secreted protein that functions as a cytokine and growth factor and mediates its signal through cell-surface proteoglycan and non-proteoglycan receptors. Binds cell-surface proteoglycan receptors via their chondroitin sulfate (CS) groups. Thereby regulates many processes like inflammatory response, cell proliferation, cell adhesion, cell growth, cell survival, tissue regeneration, cell differentiation and cell migration. Inhibits mesoderm formation and promotes neural formation during development. Plays a role in development of the neuromuscular junction (NMJ). Has antibacterial activity against both Gram-positive and Gram-negative bacteria. The polypeptide is Midkine-B (mdk-b) (Xenopus laevis (African clawed frog)).